The following is a 139-amino-acid chain: Immunogenic miracidial antigen 8I' (139 aa).

Positions 61 to 139 (IDVGDEDYHD…PKKYGSGYKH (79 aa)) are disordered. A compositionally biased stretch (acidic residues) spans 64 to 85 (GDEDYHDGDDDVDYTDDVDDVD). A compositionally biased stretch (polar residues) spans 90–103 (SPSQLLQGGYQRNQ).

This sequence belongs to the immunogenic miracidial antigen family.

The protein is Immunogenic miracidial antigen 8I' (8I') of Schistosoma japonicum (Blood fluke).